Reading from the N-terminus, the 146-residue chain is Snaclec mucetin subunit beta (146 aa).

The signal sequence occupies residues 1 to 23 (MGRFIFVSFGLLVVFISLSGTEA). 3 disulfide bridges follow: Cys27–Cys38, Cys55–Cys144, and Cys121–Cys136. One can recognise a C-type lectin domain in the interval 34-145 (YDEHCYQVFQ…CSSKRYVVCK (112 aa)).

This sequence belongs to the snaclec family. As to quaternary structure, dimer and tetramer of heterodimers of alpha and beta subunits ((alphabeta)(2) and (alphabeta)(4)); disulfide-linked. These two multimeric forms are found. The complex is glycosylated. In terms of tissue distribution, expressed by the venom gland.

The protein localises to the secreted. Potent platelet activator that acts via GPIb (GP1BA/GP1BB). After activation by the toxin, the receptor is redistributed on platelet surface thanks to cytoskeletal translocation. The indirect activation of integrin alpha-IIb/beta-3 (ITGA2B/ITGB3) also induced by the toxin is downstream the cytoskeletal translocation of GPIb. The protein is Snaclec mucetin subunit beta of Protobothrops mucrosquamatus (Taiwan habu).